The following is a 125-amino-acid chain: Small ribosomal subunit protein uS13 (125 aa).

This sequence belongs to the universal ribosomal protein uS13 family. In terms of assembly, part of the 30S ribosomal subunit. Forms a loose heterodimer with protein S19. Forms two bridges to the 50S subunit in the 70S ribosome.

Located at the top of the head of the 30S subunit, it contacts several helices of the 16S rRNA. In the 70S ribosome it contacts the 23S rRNA (bridge B1a) and protein L5 of the 50S subunit (bridge B1b), connecting the 2 subunits; these bridges are implicated in subunit movement. Contacts the tRNAs in the A and P-sites. The polypeptide is Small ribosomal subunit protein uS13 (Granulibacter bethesdensis (strain ATCC BAA-1260 / CGDNIH1)).